A 123-amino-acid chain; its full sequence is Small ribosomal subunit protein uS12 (123 aa).

Positions 1-28 are disordered; the sequence is MPTIQQLIRKPRQPKVKRSKSMHLEQCP. Basic residues predominate over residues 9–21; the sequence is RKPRQPKVKRSKS. Asp-89 carries the post-translational modification 3-methylthioaspartic acid.

It belongs to the universal ribosomal protein uS12 family. As to quaternary structure, part of the 30S ribosomal subunit. Contacts proteins S8 and S17. May interact with IF1 in the 30S initiation complex.

With S4 and S5 plays an important role in translational accuracy. Functionally, interacts with and stabilizes bases of the 16S rRNA that are involved in tRNA selection in the A site and with the mRNA backbone. Located at the interface of the 30S and 50S subunits, it traverses the body of the 30S subunit contacting proteins on the other side and probably holding the rRNA structure together. The combined cluster of proteins S8, S12 and S17 appears to hold together the shoulder and platform of the 30S subunit. This is Small ribosomal subunit protein uS12 from Ruegeria sp. (strain TM1040) (Silicibacter sp.).